Consider the following 339-residue polypeptide: Glycerol-3-phosphate dehydrogenase [NAD(P)+] (339 aa).

Positions 15, 16, 36, and 110 each coordinate NADPH. Sn-glycerol 3-phosphate-binding residues include Lys110, Gly139, and Thr141. Ala143 serves as a coordination point for NADPH. Residues Lys195, Asp248, Ser258, Arg259, and Asn260 each coordinate sn-glycerol 3-phosphate. Lys195 serves as the catalytic Proton acceptor. Residue Arg259 coordinates NADPH. Residues Val283 and Glu285 each contribute to the NADPH site.

This sequence belongs to the NAD-dependent glycerol-3-phosphate dehydrogenase family.

It is found in the cytoplasm. It catalyses the reaction sn-glycerol 3-phosphate + NAD(+) = dihydroxyacetone phosphate + NADH + H(+). The catalysed reaction is sn-glycerol 3-phosphate + NADP(+) = dihydroxyacetone phosphate + NADPH + H(+). The protein operates within membrane lipid metabolism; glycerophospholipid metabolism. Its function is as follows. Catalyzes the reduction of the glycolytic intermediate dihydroxyacetone phosphate (DHAP) to sn-glycerol 3-phosphate (G3P), the key precursor for phospholipid synthesis. This Erwinia tasmaniensis (strain DSM 17950 / CFBP 7177 / CIP 109463 / NCPPB 4357 / Et1/99) protein is Glycerol-3-phosphate dehydrogenase [NAD(P)+].